The primary structure comprises 1002 residues: TOG array regulator of axonemal microtubules protein 2 (1002 aa).

Disordered stretches follow at residues 54-74 (SSVL…EDQS), 131-214 (KRRL…SAQE), 332-351 (ETRS…KVQV), 402-421 (PLRG…PRRN), and 426-450 (LQRK…GFAR).

This sequence belongs to the Crescerin family.

The sequence is that of TOG array regulator of axonemal microtubules protein 2 (Togaram2) from Mus musculus (Mouse).